A 68-amino-acid polypeptide reads, in one-letter code: Protein SlyX homolog (68 aa).

Belongs to the SlyX family.

The polypeptide is Protein SlyX homolog (Brucella abortus (strain S19)).